The chain runs to 529 residues: Heat shock factor protein 1 (529 aa).

An N-acetylmethionine modification is found at Met-1. The DNA-binding domain stretch occupies residues Val-15 to Thr-120. Lys-80 carries the post-translational modification N6-acetyllysine. Lys-91 bears the N6-acetyllysine; alternate mark. Residue Lys-91 forms a Glycyl lysine isopeptide (Lys-Gly) (interchain with G-Cter in SUMO2); alternate linkage. Lys-118 is modified (N6-acetyllysine). At Ser-121 the chain carries Phosphoserine; by MAPKAPK2. Glycyl lysine isopeptide (Lys-Gly) (interchain with G-Cter in SUMO2) cross-links involve residues Lys-126 and Lys-131. Positions Ile-130–Leu-203 are hydrophobic repeat HR-A/B. Thr-142 is subject to Phosphothreonine; by CK2. 2 positions are modified to N6-acetyllysine: Lys-150 and Lys-188. The tract at residues Leu-203–Lys-224 is d domain. At Lys-208 the chain carries N6-acetyllysine; alternate. Lys-208 is covalently cross-linked (Glycyl lysine isopeptide (Lys-Gly) (interchain with G-Cter in SUMO2); alternate). Ser-216 is subject to Phosphoserine; by PLK1. A regulatory domain region spans residues Ser-221 to Val-310. Residue Lys-224 forms a Glycyl lysine isopeptide (Lys-Gly) (interchain with G-Cter in SUMO2) linkage. Residue Ser-230 is modified to Phosphoserine; by CAMK2A. Ser-275 and Ser-292 each carry phosphoserine. The segment at Val-295–Leu-324 is disordered. Residue Lys-298 is modified to N6-acetyllysine; alternate. Lys-298 participates in a covalent cross-link: Glycyl lysine isopeptide (Lys-Gly) (interchain with G-Cter in SUMO2); alternate. Lys-298 is covalently cross-linked (Glycyl lysine isopeptide (Lys-Gly) (interchain with G-Cter in SUMO); alternate). Ser-303 is modified (phosphoserine; by GSK3-beta). Residue Ser-307 is modified to Phosphoserine; by MAPK3. Phosphoserine occurs at positions 314 and 319. Ser-320 carries the phosphoserine; by PKA modification. Thr-323 carries the phosphothreonine modification. Ser-326 carries the post-translational modification Phosphoserine; by MAPK12. Residues Arg-336–Lys-372 form a disordered region. Ser-344 is subject to Phosphoserine. Ser-363 is modified (phosphoserine; by MAPK8). The transactivation domain stretch occupies residues Glu-371–Ser-529. The segment at Leu-384–Val-409 is hydrophobic repeat HR-C. Residues Ser-412–Pro-420 carry the 9aaTAD motif. Ser-419 is modified (phosphoserine; by PLK1). The residue at position 444 (Ser-444) is a Phosphoserine. Disordered regions lie at residues Ser-444–Lys-463 and Glu-502–Ser-529. Lys-524 is subject to N6-acetyllysine.

Belongs to the HSF family. In terms of assembly, monomer; cytoplasmic latent and transcriptionally inactive monomeric form in unstressed cells. Homotrimer; in response to stress, such as heat shock, homotrimerizes and translocates into the nucleus, binds to heat shock element (HSE) sequences in promoter of heat shock protein (HSP) genes and acquires transcriptional ability. Interacts (via monomeric form) with FKBP4; this interaction occurs in unstressed cells. Associates (via monomeric form) with HSP90 proteins in a multichaperone complex in unnstressed cell; this association maintains HSF1 in a non-DNA-binding and transcriptional inactive form by preventing HSF1 homotrimerization. Homotrimeric transactivation activity is modulated by protein-protein interactions and post-translational modifications. Interacts with HSP90AA1; this interaction is decreased in a IER5-dependent manner, promoting HSF1 accumulation in the nucleus, homotrimerization and DNA-binding activities. Part (via regulatory domain in the homotrimeric form) of a large heat shock-induced HSP90-dependent multichaperone complex at least composed of FKBP4, FKBP5, HSP90 proteins, PPID, PPP5C and PTGES3; this association maintains the HSF1 homotrimeric DNA-bound form in a transcriptionally inactive form. Interacts with BAG3 (via BAG domain); this interaction occurs in normal and heat-shocked cells promoting nuclear shuttling of HSF1 in a BAG3-dependent manner. Interacts (via homotrimeric and hyperphosphorylated form) with FKBP4; this interaction occurs upon heat shock in a HSP90-dependent multichaperone complex. Interacts (via homotrimeric form preferentially) with EEF1A proteins. In heat shocked cells, stress-denatured proteins compete with HSF1 homotrimeric DNA-bound form for association of the HSP90-dependent multichaperone complex, and hence alleviating repression of HSF1-mediated transcriptional activity. Interacts (via homotrimeric form preferentially) with DAXX; this interaction relieves homotrimeric HSF1 from repression of its transcriptional activity by HSP90-dependent multichaperone complex upon heat shock. Interacts (via D domain and preferentially with hyperphosphorylated form) with JNK1; this interaction occurs under both normal growth conditions and immediately upon heat shock. Interacts (via D domain and preferentially with hyperphosphorylated form) with MAPK3; this interaction occurs upon heat shock. Interacts with IER5 (via central region); this interaction promotes PPP2CA-induced dephosphorylation on Ser-121, Ser-307, Ser-314, Thr-323 and Thr-367 and HSF1 transactivation activity. Found in a ribonucleoprotein complex composed of the HSF1 homotrimeric form, translation elongation factor eEF1A proteins and non-coding RNA heat shock RNA-1 (HSR1); this complex occurs upon heat shock and stimulates HSF1 DNA-binding activity. Interacts (via transactivation domain) with HSPA1A/HSP70 and DNAJB1; these interactions result in the inhibition of heat shock- and HSF1-induced transcriptional activity during the attenuation and recovery phase from heat shock. Interacts (via Ser-303 and Ser-307 phosphorylated form) with YWHAE; this interaction promotes HSF1 sequestration in the cytoplasm in an ERK-dependent manner. Found in a complex with IER5 and PPP2CA. Interacts with TPR; this interaction increases upon heat shock and stimulates export of HSP70 mRNA. Interacts with SYMPK (via N-terminus) and CSTF2; these interactions occur upon heat shock. Interacts (via transactivation domain) with HSPA8. Interacts with EEF1D; this interaction occurs at heat shock promoter element (HSE) sequences. Interacts with MAPKAPK2. Interacts with PRKACA/PKA. Interacts (via transactivation domain) with GTF2A2. Interacts (via transactivation domain) with GTF2B. Interacts (via transactivation domain) with TBP. Interacts with CDK9, CCNT1 and EP300. Interacts (via N-terminus) with XRCC5 (via N-terminus) and XRCC6 (via N-terminus); these interactions are direct and prevent XRCC5/XRCC6 heterodimeric binding and non-homologous end joining (NHEJ) repair activities induced by ionizing radiation (IR). Interacts with PLK1; this interaction occurs during the early mitotic period, increases upon heat shock but does not modulate neither HSF1 homotrimerization and DNA-binding activities. Interacts (via Ser-216 phosphorylated form) with CDC20; this interaction occurs in mitosis in a MAD2L1-dependent manner and prevents PLK1-stimulated degradation of HSF1 by blocking the recruitment of the SCF(BTRC) ubiquitin ligase complex. Interacts with MAD2L1; this interaction occurs in mitosis. Interacts with BTRC; this interaction occurs during mitosis, induces its ubiquitin-dependent degradation following stimulus-dependent phosphorylation at Ser-216, a process inhibited by CDC20. Interacts with HSP90AA1 and HSP90AB1. Forms a complex with TTC5/STRAP and p300/EP300; these interactions augment chromatin-bound HSF1 and p300/EP300 histone acetyltransferase activity. Phosphorylated. Phosphorylated in unstressed cells; this phosphorylation is constitutive and implicated in the repression of HSF1 transcriptional activity. Phosphorylated on Ser-121 by MAPKAPK2; this phosphorylation promotes interaction with HSP90 proteins and inhibits HSF1 homotrimerization, DNA-binding and transactivation activities. Phosphorylation on Ser-303 by GSK3B/GSK3-beta and on Ser-307 by MAPK3 within the regulatory domain is involved in the repression of HSF1 transcriptional activity and occurs in a RAF1-dependent manner. Phosphorylation on Ser-303 and Ser-307 increases HSF1 nuclear export in a YWHAE- and XPO1/CRM1-dependent manner. Phosphorylation on Ser-307 is a prerequisite for phosphorylation on Ser-303. According to PubMed:9535852, Ser-303 is not phosphorylated in unstressed cells. Phosphorylated on Ser-419 by PLK1; phosphorylation promotes nuclear translocation upon heat shock. Hyperphosphorylated upon heat shock and during the attenuation and recovery phase period of the heat shock response. Phosphorylated on Thr-142; this phosphorylation increases HSF1 transactivation activity upon heat shock. Phosphorylation on Ser-230 by CAMK2A; this phosphorylation enhances HSF1 transactivation activity upon heat shock. Phosphorylation on Ser-326 by MAPK12; this phosphorylation enhances HSF1 nuclear translocation, homotrimerization and transactivation activities upon heat shock. Phosphorylated on Ser-320 by PRKACA/PKA; this phosphorylation promotes nuclear localization and transcriptional activity upon heat shock. Phosphorylated on Ser-363 by MAPK8; this phosphorylation occurs upon heat shock, induces HSF1 translocation into nuclear stress bodies and negatively regulates transactivation activity. Neither basal nor stress-inducible phosphorylation on Ser-230, Ser-292, Ser-303, Ser-307, Ser-314, Ser-319, Ser-320, Thr-323, Ser-326, Ser-338, Ser-344, Ser-363, Thr-367, Ser-368 and Thr-369 within the regulatory domain is involved in the regulation of HSF1 subcellular localization or DNA-binding activity; however, it negatively regulates HSF1 transactivation activity. Phosphorylated on Ser-216 by PLK1 in the early mitotic period; this phosphorylation regulates HSF1 localization to the spindle pole, the recruitment of the SCF(BTRC) ubiquitin ligase complex inducing HSF1 degradation, and hence mitotic progression. Dephosphorylated on Ser-121, Ser-307, Ser-314, Thr-323 and Thr-367 by phosphatase PPP2CA in an IER5-dependent manner, leading to HSF1-mediated transactivation activity. In terms of processing, sumoylated with SUMO1 and SUMO2 upon heat shock in a ERK2-dependent manner. Sumoylated by SUMO1 on Lys-298; sumoylation occurs upon heat shock and promotes its localization to nuclear stress bodies and DNA-binding activity. Phosphorylation on Ser-303 and Ser-307 is probably a prerequisite for sumoylation. Post-translationally, acetylated on Lys-118; this acetylation is decreased in a IER5-dependent manner. Acetylated on Lys-118, Lys-208 and Lys-298; these acetylations occur in a EP300-dependent manner. Acetylated on Lys-80; this acetylation inhibits DNA-binding activity upon heat shock. Deacetylated on Lys-80 by SIRT1; this deacetylation increases DNA-binding activity. Ubiquitinated by SCF(BTRC) and degraded following stimulus-dependent phosphorylation at Ser-216 by PLK1 in mitosis. Polyubiquitinated. Undergoes proteasomal degradation upon heat shock and during the attenuation and recovery phase period of the heat shock response.

Its subcellular location is the nucleus. It localises to the cytoplasm. It is found in the nucleoplasm. The protein resides in the perinuclear region. The protein localises to the cytoskeleton. Its subcellular location is the spindle pole. It localises to the microtubule organizing center. It is found in the centrosome. The protein resides in the chromosome. The protein localises to the centromere. Its subcellular location is the kinetochore. Its function is as follows. Functions as a stress-inducible and DNA-binding transcription factor that plays a central role in the transcriptional activation of the heat shock response (HSR), leading to the expression of a large class of molecular chaperones, heat shock proteins (HSPs), that protect cells from cellular insult damage. In unstressed cells, is present in a HSP90-containing multichaperone complex that maintains it in a non-DNA-binding inactivated monomeric form. Upon exposure to heat and other stress stimuli, undergoes homotrimerization and activates HSP gene transcription through binding to site-specific heat shock elements (HSEs) present in the promoter regions of HSP genes. Upon heat shock stress, forms a chromatin-associated complex with TTC5/STRAP and p300/EP300 to stimulate HSR transcription, therefore increasing cell survival. Activation is reversible, and during the attenuation and recovery phase period of the HSR, returns to its unactivated form. Binds to inverted 5'-NGAAN-3' pentamer DNA sequences. Binds to chromatin at heat shock gene promoters. Activates transcription of transcription factor FOXR1 which in turn activates transcription of the heat shock chaperones HSPA1A and HSPA6 and the antioxidant NADPH-dependent reductase DHRS2. Also serves several other functions independently of its transcriptional activity. Involved in the repression of Ras-induced transcriptional activation of the c-fos gene in heat-stressed cells. Positively regulates pre-mRNA 3'-end processing and polyadenylation of HSP70 mRNA upon heat-stressed cells in a symplekin (SYMPK)-dependent manner. Plays a role in nuclear export of stress-induced HSP70 mRNA. Plays a role in the regulation of mitotic progression. Also plays a role as a negative regulator of non-homologous end joining (NHEJ) repair activity in a DNA damage-dependent manner. Involved in stress-induced cancer cell proliferation in a IER5-dependent manner. Functionally, (Microbial infection) Plays a role in latent human immunodeficiency virus (HIV-1) transcriptional reactivation. Binds to the HIV-1 long terminal repeat promoter (LTR) to reactivate viral transcription by recruiting cellular transcriptional elongation factors, such as CDK9, CCNT1 and EP300. The sequence is that of Heat shock factor protein 1 from Homo sapiens (Human).